Here is a 798-residue protein sequence, read N- to C-terminus: Heterogeneous nuclear ribonucleoprotein U (798 aa).

S2 bears the N-acetylserine mark. At S4 the chain carries Phosphoserine. Positions 8–42 constitute an SAP domain; the sequence is VKKLKVSELKEELKKRRLSDKGLKADLMDRLQAAL. Residues K17 and K21 each carry the N6-acetyllysine modification. A disordered region spans residues 41 to 229; that stretch reads ALDNEAGGRP…VKRPREDHGR (189 aa). S58 carries the post-translational modification Phosphoserine. Composition is skewed to low complexity over residues 71–80 and 103–113; these read AGLEQEAAAG and ENGAAGAADAG. 2 stretches are compositionally biased toward acidic residues: residues 114-128 and 134-147; these read AMEEEEAASEDENGD and EGEDELGDEEEGAG. Low complexity predominate over residues 153 to 169; that stretch reads GEQQSQPPAAAQQASQQ. An N6-acetyllysine modification is found at K179. S180 is modified (ADP-ribosylserine). Residues 192–203 are compositionally biased toward low complexity; sequence APPGARQGQQQA. Residues 207 to 229 show a composition bias toward basic and acidic residues; sequence GKTEQKAGDKKRGVKRPREDHGR. R229 is modified (citrulline). K239 carries the N6-acetyllysine; alternate modification. A Glycyl lysine isopeptide (Lys-Gly) (interchain with G-Cter in SUMO1); alternate cross-link involves residue K239. K239 is covalently cross-linked (Glycyl lysine isopeptide (Lys-Gly) (interchain with G-Cter in SUMO2); alternate). Y240 is modified (phosphotyrosine). A phosphoserine mark is found at S241 and S245. The 197-residue stretch at 242–438 folds into the B30.2/SPRY domain; sequence RAKSPQPPVE…VEFNFGQKEK (197 aa). The residue at position 260 (T260) is a Phosphothreonine. K326 bears the N6-acetyllysine mark. An ATPase domain region spans residues 462–646; the sequence is PKGPEEKKDC…QKLLEQYKEE (185 aa). A Glycyl lysine isopeptide (Lys-Gly) (interchain with G-Cter in SUMO2) cross-link involves residue K469. 478 to 485 contributes to the ATP binding site; it reads GLPGAGKT. K490 and K498 each carry N6-acetyllysine; alternate. Glycyl lysine isopeptide (Lys-Gly) (interchain with G-Cter in SUMO2); alternate cross-links involve residues K490 and K498. T506 carries the phosphothreonine modification. K510 participates in a covalent cross-link: Glycyl lysine isopeptide (Lys-Gly) (interchain with G-Cter in SUMO2). K525 carries the N6-acetyllysine modification. K539 carries the post-translational modification N6-acetyllysine; alternate. Residue K539 forms a Glycyl lysine isopeptide (Lys-Gly) (interchain with G-Cter in SUMO2); alternate linkage. K548 is covalently cross-linked (Glycyl lysine isopeptide (Lys-Gly) (interchain with G-Cter in SUMO2)). T556 is subject to Phosphothreonine. Glycyl lysine isopeptide (Lys-Gly) (interchain with G-Cter in SUMO2) cross-links involve residues K583 and K600. The tract at residues 585 to 600 is actin-binding; it reads EDYKQRTQKKAEVEGK. K609 carries the N6-acetyllysine; alternate modification. K609 is covalently cross-linked (Glycyl lysine isopeptide (Lys-Gly) (interchain with G-Cter in SUMO2); alternate). Positions 624–651 form a coiled coil; it reads DEITYVELQKEEAQKLLEQYKEESKKAL. Residues K638 and K644 each participate in a glycyl lysine isopeptide (Lys-Gly) (interchain with G-Cter in SUMO2) cross-link. A compositionally biased stretch (basic and acidic residues) spans 645–657; the sequence is EESKKALPPEKKQ. The segment at 645 to 727 is disordered; sequence EESKKALPPE…GSGGIGYPYP (83 aa). R676 bears the Omega-N-methylarginine mark. The segment covering 684-702 has biased composition (gly residues); it reads GGFNMRGGNFRGGAPGNRG. Residues 688–713 are RNA-binding RGG-box; that stretch reads MRGGNFRGGAPGNRGGYNRRGNMPQR. Asymmetric dimethylarginine occurs at positions 689, 694, and 701. Asymmetric dimethylarginine; alternate is present on residues R707 and R713. Omega-N-methylarginine; alternate occurs at positions 707 and 713. The span at 713–723 shows a compositional bias: gly residues; that stretch reads RGGGGGSGGIG. R728 and R735 each carry asymmetric dimethylarginine. Residues 743–772 form a disordered region; that stretch reads NYNRGGMPNRGNYNQNFRGRGNNRGYKNQS. N6-acetyllysine; alternate is present on K787. K787 is covalently cross-linked (Glycyl lysine isopeptide (Lys-Gly) (interchain with G-Cter in SUMO2); alternate).

Oligomer (via ATPase domain and RNA-binding RGG-box region); oligomerization occurs upon ATP-binding in a chromatin-associated RNAs (caRNAs)- and transcription-dependent manner and is required for chromatin decompaction. ATP hydrolysis is required to cycle from an oligomeric to monomeric state to compact chromatin. Component of the coding region determinant (CRD)-mediated complex, composed of DHX9, HNRNPU, IGF2BP1, SYNCRIP and YBX1. Identified in the spliceosome C complex. Identified in a IGF2BP1-dependent mRNP granule complex containing untranslated mRNAs. Associates with heterogeneous nuclear ribonucleoprotein (hnRNP) particles. Associates (via middle region) with the C-terminal domain (CTD) RNA polymerase II (Pol II) holoenzyme; this association occurs in a RNA-independent manner. Associates (via middle region) with the core-TFIIH basal transcription factor complex; this association inhibits the CTD phosphorylation of RNA polymerase II holoenzyme by down-regulating TFIIH kinase activity. Associates with the telomerase holoenzyme complex. Associates with spindle microtubules (MTs) in a TPX2-dependent manner. Interacts (via C-terminus) with actin; this interaction is direct and mediates association with the phosphorylated CTD of RNA polymerase II and is disrupted in presence of the long non-coding H19 RNA. Interacts with AURKA. Interacts (via C-terminus) with CBX5; this interaction is, at least in part, RNA-dependent. Interacts with CR2. Interacts with CRY1. Interacts (via C-terminus) with EP300; this interaction enhances DNA-binding to nuclear scaffold/matrix attachment region (S/MAR) elements. Interacts with ERBB4. Interacts with GEMIN5. Interacts with IGF2BP1. Interacts with IGF2BP2 and IGF2BP3. Interacts with NCL; this interaction occurs during mitosis. Interacts (via C-terminus) with NR3C1 (via C-terminus). Interacts with PLK1; this interaction induces phosphorylation of HNRNPU at Ser-58 in mitosis. Interacts with POU3F4. Interacts with SMARCA4; this interaction occurs in embryonic stem cells and stimulates global Pol II-mediated transcription. Interacts (via C-terminus) with TOP2A; this interaction protects the topoisomerase TOP2A from degradation and positively regulates the relaxation of supercoiled DNA by TOP2A in a RNA-dependent manner. Interacts with TPX2; this interaction recruits HNRNPU to spindle microtubules (MTs). Interacts with UBQLN2. Interacts (via RNA-binding RGG-box region) with ZBTB7B; the interaction facilitates the recruitment of long non-coding RNA Blnc1 by ZBTB7B. Interacts with ERCC6. In terms of processing, cleaved at Asp-94 by CASP3 during T-cell apoptosis, resulting in a loss of DNA- and chromatin-binding activities. Extensively phosphorylated. Phosphorylated on Ser-58 by PLK1 and dephosphorylated by protein phosphatase 2A (PP2A) in mitosis. Post-translationally, arg-707 and Arg-713 are dimethylated, probably to asymmetric dimethylarginine. In terms of processing, citrullinated by PADI4.

Its subcellular location is the nucleus. It localises to the nucleus matrix. The protein localises to the chromosome. The protein resides in the nucleus speckle. It is found in the cytoplasm. Its subcellular location is the cytoskeleton. It localises to the microtubule organizing center. The protein localises to the centrosome. The protein resides in the centromere. It is found in the kinetochore. Its subcellular location is the spindle. It localises to the spindle pole. The protein localises to the midbody. The protein resides in the cell surface. It is found in the cytoplasmic granule. DNA- and RNA-binding protein involved in several cellular processes such as nuclear chromatin organization, telomere-length regulation, transcription, mRNA alternative splicing and stability, Xist-mediated transcriptional silencing and mitotic cell progression. Plays a role in the regulation of interphase large-scale gene-rich chromatin organization through chromatin-associated RNAs (caRNAs) in a transcription-dependent manner, and thereby maintains genomic stability. Required for the localization of the long non-coding Xist RNA on the inactive chromosome X (Xi) and the subsequent initiation and maintenance of X-linked transcriptional gene silencing during X-inactivation. Required for the topoisomerase TOP2A protein stability and activity in a RNA-dependent manner. Plays a role as a RNA polymerase II (Pol II) holoenzyme transcription regulator. Promotes transcription initiation by direct association with the core-TFIIH basal transcription factor complex for the assembly of a functional pre-initiation complex with Pol II in a actin-dependent manner. Blocks Pol II transcription elongation activity by inhibiting the C-terminal domain (CTD) phosphorylation of Pol II and dissociates from Pol II pre-initiation complex prior to productive transcription elongation. Positively regulates CBX5-induced transcriptional gene silencing and retention of CBX5 in the nucleus. Negatively regulates glucocorticoid-mediated transcriptional activation. Key regulator of transcription initiation and elongation in embryonic stem cells upon leukemia inhibitory factor (LIF) signaling. Involved in the long non-coding RNA H19-mediated Pol II transcriptional repression. Participates in the circadian regulation of the core clock component BMAL1 transcription. Plays a role in the regulation of telomere length. Plays a role as a global pre-mRNA alternative splicing modulator by regulating U2 small nuclear ribonucleoprotein (snRNP) biogenesis. Plays a role in mRNA stability. Component of the CRD-mediated complex that promotes MYC mRNA stabilization. Enhances the expression of specific genes, such as tumor necrosis factor TNFA, by regulating mRNA stability, possibly through binding to the 3'-untranslated region (UTR). Plays a role in mitotic cell cycle regulation. Involved in the formation of stable mitotic spindle microtubules (MTs) attachment to kinetochore, spindle organization and chromosome congression. Phosphorylation at Ser-58 by PLK1 is required for chromosome alignement and segregation and progression through mitosis. Also contributes to the targeting of AURKA to mitotic spindle MTs. Binds to double- and single-stranded DNA and RNA, poly(A), poly(C) and poly(G) oligoribonucleotides. Binds to chromatin-associated RNAs (caRNAs). Associates with chromatin to scaffold/matrix attachment region (S/MAR) elements in DNA. Associates with chromatin in a chromatin-associated RNAs (caRNAs)-dependent manner. Binds to the Xist RNA. Binds the long non-coding H19 RNA. Binds to SMN1/2 pre-mRNAs at G/U-rich regions. Binds to small nuclear RNAs (snRNAs). Binds to the 3'-UTR of TNFA mRNA. Binds (via RNA-binding RGG-box region) to the long non-coding Xist RNA; this binding is direct and bridges the Xist RNA and the inactive chromosome X (Xi). Also negatively regulates embryonic stem cell differentiation upon LIF signaling. Required for embryonic development. Binds to brown fat long non-coding RNA 1 (Blnc1); facilitates the recruitment of Blnc1 by ZBTB7B required to drive brown and beige fat development and thermogenesis. In Rattus norvegicus (Rat), this protein is Heterogeneous nuclear ribonucleoprotein U.